The chain runs to 256 residues: Hemin import ATP-binding protein HmuV (256 aa).

The region spanning 2-238 (ISAQNLVYSL…QALTMLYGAD (237 aa)) is the ABC transporter domain. Residue 34-41 (GPNGAGKS) coordinates ATP.

It belongs to the ABC transporter superfamily. Heme (hemin) importer (TC 3.A.1.14.5) family. The complex is composed of two ATP-binding proteins (HmuV), two transmembrane proteins (HmuU) and a solute-binding protein (HmuT).

Its subcellular location is the cell inner membrane. Its function is as follows. Part of the ABC transporter complex HmuTUV involved in hemin import. Responsible for energy coupling to the transport system. This Escherichia coli O157:H7 protein is Hemin import ATP-binding protein HmuV.